The following is a 20-amino-acid chain: Unknown protein NF019 from 2D-PAGE (20 aa).

The polypeptide is Unknown protein NF019 from 2D-PAGE (Naegleria fowleri (Brain eating amoeba)).